A 372-amino-acid polypeptide reads, in one-letter code: MTSIEPTHTGKKVIVGMSGGVDSSVSAYLLMQQGYQVEGLFMKNWEEDDNDEYCAAAEDLKDAQAVCDKLGIKLHTVNFAAEYWDNVFEYFLAEYKAGRTPNPDIMCNKEIKFKAFLDFADDILDADYIAMGHYVRRRDNADGTTQMLRGVDNNKDQSYFLYTLSHEQVARSLFPVGELEKHEVREIAKKMGLITHDKKDSTGICFIGERKFTEFLGNYLPAQPGNIETAEGEVIGKHQGLMYHTLGQRKGLGIGGMKNSNDDPWYVVDKDLKRNVLVVGQGGHHPRLMSNGMFVNQLHWVDRKGPVEGSQIVVKTRYRQQDIPCTLTYLDDNTLKVVFDEPVAAVTPGQSAVFYDGDVCLGGGIIDQLIRG.

Residues 16 to 23 and methionine 42 each bind ATP; that span reads GMSGGVDS. The interaction with target base in tRNA stretch occupies residues 102-104; sequence NPD. Residue cysteine 107 is the Nucleophile of the active site. A disulfide bond links cysteine 107 and cysteine 205. An ATP-binding site is contributed by glycine 132. Positions 155–157 are interaction with tRNA; it reads KDQ. The active-site Cysteine persulfide intermediate is cysteine 205. Residues 317–318 are interaction with tRNA; sequence RY.

Belongs to the MnmA/TRMU family.

Its subcellular location is the cytoplasm. It catalyses the reaction S-sulfanyl-L-cysteinyl-[protein] + uridine(34) in tRNA + AH2 + ATP = 2-thiouridine(34) in tRNA + L-cysteinyl-[protein] + A + AMP + diphosphate + H(+). Catalyzes the 2-thiolation of uridine at the wobble position (U34) of tRNA, leading to the formation of s(2)U34. The protein is tRNA-specific 2-thiouridylase MnmA of Shewanella sp. (strain MR-7).